The primary structure comprises 44 residues: MKRTFQPKNLIRKRRHGFRSRMATRAGRKILNRRRSLGCKKLCA.

Belongs to the bacterial ribosomal protein bL34 family.

This is Large ribosomal subunit protein bL34 from Wolbachia sp. subsp. Brugia malayi (strain TRS).